A 119-amino-acid polypeptide reads, in one-letter code: Chorion class CA protein ERA.2 (119 aa).

The N-terminal stretch at 1–21 is a signal peptide; sequence MSKLVVFLFCIQVCFIQNVYS. The left arm stretch occupies residues 22 to 55; it reads QCLGRVGPGGPPLGPYGGPLGGPGYGPVGYGGCG. The segment at 56-103 is central domain; the sequence is GYGGSGIGNVAVAGELPVAGSTGVTGQVPVIGAVEFAGPACAVGSVSI. The interval 104–119 is right arm; the sequence is SGACGPTCGCGGSPFY.

The protein belongs to the chorion protein family.

In terms of biological role, this protein is one of many from the eggshell of the silk moth. In Bombyx mori (Silk moth), this protein is Chorion class CA protein ERA.2 (ERA.2).